Reading from the N-terminus, the 535-residue chain is Ankyrin repeat domain-containing protein 34C (535 aa).

4 ANK repeats span residues T10–E39, K43–I80, S84–L114, and T118–K147. Disordered regions lie at residues S159–S181 and A214–S237. Positions H216–A225 are enriched in polar residues. S301 carries the post-translational modification Phosphoserine. The interval D381–R444 is disordered. A Phosphoserine modification is found at S447.

Belongs to the ANKRD34 family.

The chain is Ankyrin repeat domain-containing protein 34C (ANKRD34C) from Homo sapiens (Human).